The sequence spans 126 residues: Methylglyoxal synthase (126 aa).

An MGS-like domain is found at 1–126 (MEKKIALIAH…LIKGLESLIF (126 aa)). Substrate-binding positions include histidine 10, lysine 14, 36 to 39 (TGTT), and 56 to 57 (SG). The active-site Proton donor/acceptor is aspartate 62. Histidine 89 serves as a coordination point for substrate.

It belongs to the methylglyoxal synthase family.

It catalyses the reaction dihydroxyacetone phosphate = methylglyoxal + phosphate. Functionally, catalyzes the formation of methylglyoxal from dihydroxyacetone phosphate. This Borreliella burgdorferi (strain ATCC 35210 / DSM 4680 / CIP 102532 / B31) (Borrelia burgdorferi) protein is Methylglyoxal synthase.